The primary structure comprises 388 residues: UDP-N-acetylglucosamine--N-acetylmuramyl-(pentapeptide) pyrophosphoryl-undecaprenol N-acetylglucosamine transferase (388 aa).

UDP-N-acetyl-alpha-D-glucosamine-binding positions include 15–17, Asn125, Arg168, Ser196, and Gln297; that span reads TGG.

This sequence belongs to the glycosyltransferase 28 family. MurG subfamily.

The protein localises to the cell inner membrane. It carries out the reaction di-trans,octa-cis-undecaprenyl diphospho-N-acetyl-alpha-D-muramoyl-L-alanyl-D-glutamyl-meso-2,6-diaminopimeloyl-D-alanyl-D-alanine + UDP-N-acetyl-alpha-D-glucosamine = di-trans,octa-cis-undecaprenyl diphospho-[N-acetyl-alpha-D-glucosaminyl-(1-&gt;4)]-N-acetyl-alpha-D-muramoyl-L-alanyl-D-glutamyl-meso-2,6-diaminopimeloyl-D-alanyl-D-alanine + UDP + H(+). Its pathway is cell wall biogenesis; peptidoglycan biosynthesis. Cell wall formation. Catalyzes the transfer of a GlcNAc subunit on undecaprenyl-pyrophosphoryl-MurNAc-pentapeptide (lipid intermediate I) to form undecaprenyl-pyrophosphoryl-MurNAc-(pentapeptide)GlcNAc (lipid intermediate II). The polypeptide is UDP-N-acetylglucosamine--N-acetylmuramyl-(pentapeptide) pyrophosphoryl-undecaprenol N-acetylglucosamine transferase (Novosphingobium aromaticivorans (strain ATCC 700278 / DSM 12444 / CCUG 56034 / CIP 105152 / NBRC 16084 / F199)).